Here is a 1523-residue protein sequence, read N- to C-terminus: Lysophospholipase nte1 (1523 aa).

Residues 1–66 lie on the Cytoplasmic side of the membrane; the sequence is MADGVTLVDS…LPPVPTTMAG (66 aa). Residues 67 to 87 form a helical membrane-spanning segment; sequence WIGWVFSFFFQVIPSVLYWVI. The Lumenal segment spans residues 88–109; sequence TFSTITLPTWLFTLFSMSLTFT. Residues 110–130 form a helical membrane-spanning segment; it reads MNFTTLLLIVLAMVSTISWFI. Residues 131-1523 lie on the Cytoplasmic side of the membrane; sequence RYRFLNMYSR…RTMAPRRASI (1393 aa). Disordered regions lie at residues 309-384 and 524-545; these read VPNS…KSVH and RAAT…GVSP. Over residues 370 to 382 the composition is skewed to basic residues; the sequence is ESRKHSSRKRRKS. Residues 681 to 800 and 841 to 961 contribute to the a nucleoside 3',5'-cyclic phosphate site; these read GGTS…GAVA and RLTS…IAQR. The region spanning 1220-1384 is the PNPLA domain; the sequence is LVLGGGGARG…IDNLTVDHMK (165 aa). Residues 1224 to 1229 carry the GXGXXG motif; that stretch reads GGGARG. A GXSXG motif is present at residues 1251 to 1255; that stretch reads GTSIG. The active-site Nucleophile is the Ser1253. Asp1371 functions as the Proton acceptor in the catalytic mechanism. A DGA/G motif is present at residues 1371 to 1373; that stretch reads DGG. The interval 1502 to 1523 is disordered; sequence LPEETEEKKKLQRTMAPRRASI.

It belongs to the NTE family.

It is found in the endoplasmic reticulum membrane. It carries out the reaction a 1-acyl-sn-glycero-3-phosphocholine + H2O = sn-glycerol 3-phosphocholine + a fatty acid + H(+). Inhibited by organophosphorus esters. Functionally, intracellular phospholipase B that catalyzes the double deacylation of phosphatidylcholine (PC) to glycerophosphocholine (GroPCho). Plays an important role in membrane lipid homeostasis. Responsible for the rapid PC turnover in response to inositol, elevated temperatures, or when choline is present in the growth medium. The protein is Lysophospholipase nte1 (nte1) of Neosartorya fischeri (strain ATCC 1020 / DSM 3700 / CBS 544.65 / FGSC A1164 / JCM 1740 / NRRL 181 / WB 181) (Aspergillus fischerianus).